The sequence spans 85 residues: uncharacterized protein (85 aa).

Belongs to the BolA/IbaG family.

This is an uncharacterized protein from Haemophilus influenzae (strain ATCC 51907 / DSM 11121 / KW20 / Rd).